The chain runs to 311 residues: Ribosomal protein L11 methyltransferase (311 aa).

Residues threonine 162, glycine 183, aspartate 205, and asparagine 248 each contribute to the S-adenosyl-L-methionine site.

This sequence belongs to the methyltransferase superfamily. PrmA family.

The protein localises to the cytoplasm. The enzyme catalyses L-lysyl-[protein] + 3 S-adenosyl-L-methionine = N(6),N(6),N(6)-trimethyl-L-lysyl-[protein] + 3 S-adenosyl-L-homocysteine + 3 H(+). Functionally, methylates ribosomal protein L11. The chain is Ribosomal protein L11 methyltransferase from Bacillus pumilus (strain SAFR-032).